The following is a 165-amino-acid chain: UBA-like domain-containing protein 2-B (165 aa).

The tract at residues 119-165 is disordered; the sequence is QQPVWLPPASPTAHLHHHHHHPQPVWPPNSQPTGGPQKAMAAMDGQR.

This sequence belongs to the UBALD family.

This Xenopus laevis (African clawed frog) protein is UBA-like domain-containing protein 2-B (ubald2-b).